We begin with the raw amino-acid sequence, 229 residues long: Non-structural protein V (229 aa).

Composition is skewed to polar residues over residues 30 to 46 and 82 to 112; these read ATSQSSLNKPPSQSSRT and GRQNLDSLSMISNKPQTGTLLMGSDTQLPSP. Residues 30-112 are disordered; the sequence is ATSQSSLNKP…MGSDTQLPSP (83 aa). 8 residues coordinate Zn(2+): H178, C197, C201, C213, C215, C218, C222, and C225.

This sequence belongs to the paramyxoviruses V protein family.

Its function is as follows. Blocks host interferon signaling. This Homo sapiens (Human) protein is Non-structural protein V (P/V).